The following is a 520-amino-acid chain: MQSWQKPLVADFRSVVGEDQPVPLHMWDTASREVTPLTPSDEATVYVCGITPYDSTHLGHAATYVTFDVLNRQLLANGHRVNFVQNVTDVDDPLFERAQRDGVDWQELGEEQTDLFRQDMANLGVIPPTSYIGAVEAIPDVIDMVSTLLDNGSAYVVDDPTYPDVYADRTATPQFGYESRYDEATMEQFFAERGGDPDRPGKRDPLDSLLWRAERPGEPAWDSPFGRGRPGWHIECAAIAARYLGSHFDVQGGGEDLIFPHHEYSAAHVEAACGVERMADHYMHTGLIALGGVKMSKSLGNLVFVSRLCNAGTDPSSIRLALYAGHYRDQRNWSDALLAAASRRLALWRTAVETVHAHNDADSEARARRLVDDVRQALATDLDTPAAVDLVDEWAGSIVDKEKIWDLPGVDGKNAHESLSVPVPCAAPATDDKLSVAQGKITILDDGKDSEADAKSVELASATAGTQRCGAHSHASGELTVDLLPAPHQRGDAPSALYSHLSPAAALVAGCVDALLGLKL.

Residue C48 coordinates Zn(2+). L-cysteinyl-5'-AMP-binding positions include 48–51 (CGIT), T63, and 86–88 (NVT). Positions 50–60 (ITPYDSTHLGH) match the 'HIGH' region motif. A 'ERGGDP' region motif is present at residues 192 to 197 (ERGGDP). Residue W232 coordinates L-cysteinyl-5'-AMP. C236 is a binding site for Zn(2+). 254–256 (GED) contacts L-cysteinyl-5'-AMP. H261 is a binding site for Zn(2+). I288 provides a ligand contact to L-cysteinyl-5'-AMP. Residues 294–298 (KMSKS) carry the 'KMSKS' region motif.

This sequence belongs to the class-I aminoacyl-tRNA synthetase family. MshC subfamily. Monomer. Zn(2+) serves as cofactor.

It catalyses the reaction 1D-myo-inositol 2-amino-2-deoxy-alpha-D-glucopyranoside + L-cysteine + ATP = 1D-myo-inositol 2-(L-cysteinylamino)-2-deoxy-alpha-D-glucopyranoside + AMP + diphosphate + H(+). Its function is as follows. Catalyzes the ATP-dependent condensation of GlcN-Ins and L-cysteine to form L-Cys-GlcN-Ins. The polypeptide is L-cysteine:1D-myo-inositol 2-amino-2-deoxy-alpha-D-glucopyranoside ligase (Corynebacterium kroppenstedtii (strain DSM 44385 / JCM 11950 / CIP 105744 / CCUG 35717)).